The sequence spans 156 residues: ATP synthase subunit b (156 aa).

A helical transmembrane segment spans residues 7 to 29 (LIAQAISFAILIWFTTKFVWPYL).

It belongs to the ATPase B chain family. As to quaternary structure, F-type ATPases have 2 components, F(1) - the catalytic core - and F(0) - the membrane proton channel. F(1) has five subunits: alpha(3), beta(3), gamma(1), delta(1), epsilon(1). F(0) has three main subunits: a(1), b(2) and c(10-14). The alpha and beta chains form an alternating ring which encloses part of the gamma chain. F(1) is attached to F(0) by a central stalk formed by the gamma and epsilon chains, while a peripheral stalk is formed by the delta and b chains.

It is found in the cell inner membrane. Its function is as follows. F(1)F(0) ATP synthase produces ATP from ADP in the presence of a proton or sodium gradient. F-type ATPases consist of two structural domains, F(1) containing the extramembraneous catalytic core and F(0) containing the membrane proton channel, linked together by a central stalk and a peripheral stalk. During catalysis, ATP synthesis in the catalytic domain of F(1) is coupled via a rotary mechanism of the central stalk subunits to proton translocation. In terms of biological role, component of the F(0) channel, it forms part of the peripheral stalk, linking F(1) to F(0). This chain is ATP synthase subunit b, found in Methylobacillus flagellatus (strain ATCC 51484 / DSM 6875 / VKM B-1610 / KT).